Here is a 529-residue protein sequence, read N- to C-terminus: MAPEMDQFYRSTMAIYKSILEQFNPALENLVYLGNNYLRAFHALSEAAEVYFNAIQKIGEQALQSSTSQILGEILVQMSDTQRHLNSDLEVVVQTFHGDLLQHMEKNTKLDMQFIKDSRQHYEMEYRHRAANLEKSMSQLWRMERKRDKNAREMKESVNRLHAQMQAFVSESQRAAELEEKRRYRFLAEKHLLLSNTFLQFFGRARGMLQNRVLLWKEQSEASRSPSRAHSPGLLGPVLGPPYPSGRLTPTRLDMPQRALGEFGSPRSRHGSGSYGPEPAEARSASQLEPDHRRSLPRTPSASSLYSSSTQRSRSNSFGERPGGGGGGGGARRVRALVSHSEGANHTLLRFSAGDVVEVLVPEAQNGWLYGKLEGSSSSGWFPEAYVKPLDELPVNPMNPLNPVTSMNPRSPVNELPSRLRSYPLRGSHSLDDLLDRPGNSTASSDYWDGQSRSRTPSHIPSRTPSPAPTPLPSSRRSSMGSMGVASDVKKLASWEQQPPELFPRGTNPFATVKLRPTVTNDRSAPLIR.

The region spanning 1-239 (MAPEMDQFYR…HSPGLLGPVL (239 aa)) is the IMD domain. 2 disordered regions span residues 221 to 332 (EASR…GGAR) and 399 to 529 (NPLN…PLIR). Phosphoserine is present on residues S231, S272, and S304. The segment covering 301-317 (SASSLYSSSTQRSRSNS) has biased composition (low complexity). Residues 321-331 (RPGGGGGGGGA) are compositionally biased toward gly residues. One can recognise an SH3 domain in the interval 329–392 (GGARRVRALV…PEAYVKPLDE (64 aa)). Residues 439-459 (GNSTASSDYWDGQSRSRTPSH) are compositionally biased toward polar residues. Over residues 473-484 (PSSRRSSMGSMG) the composition is skewed to low complexity. A phosphoserine mark is found at S479 and S482.

The protein localises to the cell membrane. Its subcellular location is the cell junction. It is found in the cytoplasmic vesicle membrane. Functionally, phosphoinositides-binding protein that induces the formation of planar or gently curved membrane structures. Binds to phosphoinositides, including to phosphatidylinositol 4,5-bisphosphate (PtdIns(4,5)P2) headgroups. There seems to be no clear preference for a specific phosphoinositide. The sequence is that of BAR/IMD domain-containing adapter protein 2-like 2 (BAIAP2L2) from Bos taurus (Bovine).